A 552-amino-acid polypeptide reads, in one-letter code: Lon protease 2 (552 aa).

Position 97 to 104 (97 to 104) interacts with ATP; it reads GPPGVGKT. Residues 349 to 535 form the Lon proteolytic domain; the sequence is EPQVGIVNGL…QEVLDEILVN (187 aa). Active-site residues include S445 and K488.

It belongs to the peptidase S16 family. In terms of assembly, homohexamer. Organized in a ring with a central cavity.

It is found in the cytoplasm. It catalyses the reaction Hydrolysis of proteins in presence of ATP.. In terms of biological role, ATP-dependent serine protease that mediates the selective degradation of mutant and abnormal proteins as well as certain short-lived regulatory proteins. Required for cellular homeostasis and for survival from DNA damage and developmental changes induced by stress. Degrades polypeptides processively to yield small peptide fragments that are 5 to 10 amino acids long. Binds to DNA in a double-stranded, site-specific manner. This is Lon protease 2 (lon2) from Bacillus subtilis (strain 168).